The chain runs to 2282 residues: Ectopic P granules protein 5 homolog (2282 aa).

It belongs to the EPG5 family.

Its function is as follows. Involved in autophagy. This Aedes aegypti (Yellowfever mosquito) protein is Ectopic P granules protein 5 homolog.